The chain runs to 128 residues: Large ribosomal subunit protein bL12 (128 aa).

The protein belongs to the bacterial ribosomal protein bL12 family. As to quaternary structure, homodimer. Part of the ribosomal stalk of the 50S ribosomal subunit. Forms a multimeric L10(L12)X complex, where L10 forms an elongated spine to which 2 to 4 L12 dimers bind in a sequential fashion. Binds GTP-bound translation factors.

In terms of biological role, forms part of the ribosomal stalk which helps the ribosome interact with GTP-bound translation factors. Is thus essential for accurate translation. This chain is Large ribosomal subunit protein bL12, found in Petrotoga mobilis (strain DSM 10674 / SJ95).